The chain runs to 554 residues: Sesquiterpene synthase 14a (554 aa).

Residues Asp305, Asp309, Asp449, and Glu457 each contribute to the Mg(2+) site. The DDXXD motif motif lies at 305–309 (DDLYD).

This sequence belongs to the terpene synthase family. Tpsa subfamily. The cofactor is Mg(2+). It depends on Mn(2+) as a cofactor. In terms of tissue distribution, mostly expressed in stem trichomes.

It catalyses the reaction (2E,6E)-farnesyl diphosphate = beta-bisabolene + diphosphate. It carries out the reaction (2E,6E)-farnesyl diphosphate = (Z)-alpha-bisabolene + diphosphate. The enzyme catalyses (2E,6E)-farnesyl diphosphate = beta-acoradiene + diphosphate. The catalysed reaction is (2E,6E)-farnesyl diphosphate = (E)-gamma-bisabolene + diphosphate. It catalyses the reaction (2E,6E)-farnesyl diphosphate = (E)-beta-farnesene + diphosphate. It carries out the reaction (2E,6E)-farnesyl diphosphate = (Z)-beta-farnesene + diphosphate. The enzyme catalyses (2E)-geranyl diphosphate = limonene + diphosphate. The catalysed reaction is (2E)-geranyl diphosphate = beta-myrcene + diphosphate. It participates in secondary metabolite biosynthesis; terpenoid biosynthesis. Functionally, sesquiterpene synthase involved in the biosynthesis of volatile compounds. Mediates the conversion of (2E,6E)-farnesyl diphosphate ((EE)-FPP) into beta-bisabolene, beta-farnesene, (E)-gamma-bisabolene, beta-acoradiene, selinene and (Z)-alpha-bisabolene. Low or no activity with (2Z,6Z)-farnesyl diphosphate ((ZZ)-FPP). Can act with a low efficiency as a monoterpene synthase with geranyl diphosphate (GPP) as substrate, thus producing beta-myrcene and limonene. The polypeptide is Sesquiterpene synthase 14a (Solanum habrochaites (Wild tomato)).